A 314-amino-acid polypeptide reads, in one-letter code: MEFEMYLKNSGIEFLKDHPLKEFTTFKIGGKARYIVFPKSTKQLIEILTLAKDEAINYIVVGNCSNVLVSDKGYNGAIITTVKIDSFKIDGNLIEAECGAMLSHVARKACEAGLKGLEFAVGIPGTVGGAVYMNAGAYDGEIKDVFERAEVLDENLNPVELGRADMRFSYRNSRLKEEKMVLLRAVFCLKFADREDISPLQKANEFSKRRREKQPLSYPSAGSVFKRPPNNFAGKLIEDAGLKGYRIGGACISEKHAGFIINLGDAKAEDVRKLIYLAQKSVYEKFGILLEPEIQFIGEFETPLFVPVDGQNRR.

An FAD-binding PCMH-type domain is found at 27-192 (KIGGKARYIV…LRAVFCLKFA (166 aa)). The active site involves Arg-171. The active-site Proton donor is the Ser-223. Glu-293 is an active-site residue.

The protein belongs to the MurB family. Requires FAD as cofactor.

The protein resides in the cytoplasm. The catalysed reaction is UDP-N-acetyl-alpha-D-muramate + NADP(+) = UDP-N-acetyl-3-O-(1-carboxyvinyl)-alpha-D-glucosamine + NADPH + H(+). The protein operates within cell wall biogenesis; peptidoglycan biosynthesis. Its function is as follows. Cell wall formation. The sequence is that of UDP-N-acetylenolpyruvoylglucosamine reductase from Caldicellulosiruptor bescii (strain ATCC BAA-1888 / DSM 6725 / KCTC 15123 / Z-1320) (Anaerocellum thermophilum).